We begin with the raw amino-acid sequence, 130 residues long: Histone H2A type 1 (130 aa).

Residues 1–22 form a disordered region; the sequence is MSGRGKQGGKARAKAKSRSSRA. An N-acetylserine modification is found at Ser2. Residue Ser2 is modified to Phosphoserine; by RPS6KA5. Arg4 carries the citrulline; alternate modification. A Symmetric dimethylarginine; by PRMT5; alternate modification is found at Arg4. Lys6 carries the post-translational modification N6-(2-hydroxyisobutyryl)lysine. Basic residues predominate over residues 7–19; it reads QGGKARAKAKSRS. Lys10 bears the N6-(2-hydroxyisobutyryl)lysine; alternate mark. Lys10 is modified (N6-lactoyllysine; alternate). Lys10 carries the N6-succinyllysine; alternate modification. Glycyl lysine isopeptide (Lys-Gly) (interchain with G-Cter in ubiquitin) cross-links involve residues Lys14 and Lys16. The residue at position 37 (Lys37) is an N6-(2-hydroxyisobutyryl)lysine; alternate. N6-(beta-hydroxybutyryl)lysine; alternate is present on Lys37. The residue at position 37 (Lys37) is an N6-crotonyllysine; alternate. 2 positions are modified to N6-(2-hydroxyisobutyryl)lysine: Lys75 and Lys76. At Lys96 the chain carries N6-(2-hydroxyisobutyryl)lysine; alternate. At Lys96 the chain carries N6-succinyllysine; alternate. The residue at position 96 (Lys96) is an N6-glutaryllysine; alternate. N6-glutaryllysine is present on Lys100. Gln105 is subject to N5-methylglutamine. An N6-(2-hydroxyisobutyryl)lysine; alternate modification is found at Lys119. 2 positions are modified to N6-crotonyllysine; alternate: Lys119 and Lys120. An N6-glutaryllysine; alternate mark is found at Lys119 and Lys120. Residue Lys120 forms a Glycyl lysine isopeptide (Lys-Gly) (interchain with G-Cter in ubiquitin); alternate linkage. Thr121 is modified (phosphothreonine; by DCAF1). Position 126 is an N6-crotonyllysine; alternate (Lys126). N6-glutaryllysine; alternate is present on Lys126.

Belongs to the histone H2A family. As to quaternary structure, the nucleosome is a histone octamer containing two molecules each of H2A, H2B, H3 and H4 assembled in one H3-H4 heterotetramer and two H2A-H2B heterodimers. The octamer wraps approximately 147 bp of DNA. Interacts with VRK1; the interaction is mediated by the nucleosome acidic patch, a cluster of negatively charged residues of H2A and H2B forming a cleft within the nucleosome core. Deiminated on Arg-4 in granulocytes upon calcium entry. In terms of processing, monoubiquitination of Lys-120 (H2AK119Ub) by RING1, TRIM37 and RNF2/RING2 complex gives a specific tag for epigenetic transcriptional repression and participates in X chromosome inactivation of female mammals. It is involved in the initiation of both imprinted and random X inactivation. Ubiquitinated H2A is enriched in inactive X chromosome chromatin. Ubiquitination of H2A functions downstream of methylation of 'Lys-27' of histone H3 (H3K27me). H2AK119Ub by RNF2/RING2 can also be induced by ultraviolet and may be involved in DNA repair. Following DNA double-strand breaks (DSBs), it is ubiquitinated through 'Lys-63' linkage of ubiquitin moieties by the E2 ligase UBE2N and the E3 ligases RNF8 and RNF168, leading to the recruitment of repair proteins to sites of DNA damage. Ubiquitination at Lys-14 and Lys-16 (H2AK13Ub and H2AK15Ub, respectively) in response to DNA damage is initiated by RNF168 that mediates monoubiquitination at these 2 sites, and 'Lys-63'-linked ubiquitin are then conjugated to monoubiquitin; RNF8 is able to extend 'Lys-63'-linked ubiquitin chains in vitro. H2AK119Ub and ionizing radiation-induced 'Lys-63'-linked ubiquitination (H2AK13Ub and H2AK15Ub) are distinct events. Post-translationally, phosphorylation on Ser-2 (H2AS1ph) is enhanced during mitosis. Phosphorylation on Ser-2 by RPS6KA5/MSK1 directly represses transcription. Acetylation of H3 inhibits Ser-2 phosphorylation by RPS6KA5/MSK1. Phosphorylation at Thr-121 (H2AT120ph) by DCAF1 is present in the regulatory region of many tumor suppresor genes and down-regulates their transcription. Symmetric dimethylation on Arg-4 by the PRDM1/PRMT5 complex may play a crucial role in the germ-cell lineage. In terms of processing, glutamine methylation at Gln-105 (H2AQ104me) by FBL is specifically dedicated to polymerase I. It is present at 35S ribosomal DNA locus and impairs binding of the FACT complex. Post-translationally, crotonylation (Kcr) is specifically present in male germ cells and marks testis-specific genes in post-meiotic cells, including X-linked genes that escape sex chromosome inactivation in haploid cells. Crotonylation marks active promoters and enhancers and confers resistance to transcriptional repressors. It is also associated with post-meiotically activated genes on autosomes. Lactylated in macrophages by EP300/P300 by using lactoyl-CoA directly derived from endogenous or exogenous lactate, leading to stimulates gene transcription.

The protein resides in the nucleus. Its subcellular location is the chromosome. In terms of biological role, core component of nucleosome. Nucleosomes wrap and compact DNA into chromatin, limiting DNA accessibility to the cellular machineries which require DNA as a template. Histones thereby play a central role in transcription regulation, DNA repair, DNA replication and chromosomal stability. DNA accessibility is regulated via a complex set of post-translational modifications of histones, also called histone code, and nucleosome remodeling. The chain is Histone H2A type 1 from Rattus norvegicus (Rat).